The sequence spans 237 residues: Mitochondrial carrier-like protein L276 (237 aa).

3 Solcar repeats span residues 1–83, 85–161, and 164–233; these read MAKY…FENK, YPYT…LNEY, and KPVV…LNKK. A run of 5 helical transmembrane segments spans residues 11-27, 60-76, 91-108, 140-160, and 166-183; these read AIATIVAEIITLPICTF, VPAIMSQTYSTSSKYFL, MINGIISGIMTSLITHPI, SFGKTVISSSMFFPLYETLNE, and VVSSMLTAIISTTIMQPL. Residues 191–196 carry the Substrate recognition motif; that stretch reads IYGLSL. The helical transmembrane segment at 205–226 threads the bilayer; that stretch reads YYRGLSLNLMRIVPHFVITMTT.

It belongs to the mitochondrial carrier (TC 2.A.29) family.

The protein localises to the host mitochondrion inner membrane. Transports dATP and to a lesser extent dTTP, TTP, UTP and ADP, possibly across the mitochondrial inner membrane. This is Mitochondrial carrier-like protein L276 from Acanthamoeba polyphaga (Amoeba).